Here is a 100-residue protein sequence, read N- to C-terminus: Osteocalcin (100 aa).

Positions 1-23 are cleaved as a signal peptide; it reads MRALTLLALLALAALCITGQAGA. Positions 24-51 are excised as a propeptide; the sequence is KPSGADSSKGAAFVSKQEGSEVVKRPRR. The Gla domain occupies 52–98; sequence YLYQWLGAPVPYPDPLEPKREVCELNPDCDELADHIGFQEAYRRFYG. The Ca(2+) site is built by E68, E72, E75, and D81. 3 positions are modified to 4-carboxyglutamate: E68, E72, and E75. A disulfide bridge connects residues C74 and C80.

Belongs to the osteocalcin/matrix Gla protein family. In terms of processing, gamma-carboxyglutamate residues are formed by vitamin K dependent carboxylation by GGCX. These residues are essential for the binding of calcium. Decarboxylation promotes the hormone activity.

The protein localises to the secreted. The carboxylated form is one of the main organic components of the bone matrix, which constitutes 1-2% of the total bone protein: it acts as a negative regulator of bone formation and is required to limit bone formation without impairing bone resorption or mineralization. The carboxylated form binds strongly to apatite and calcium. In terms of biological role, the uncarboxylated form acts as a hormone secreted by osteoblasts, which regulates different cellular processes, such as energy metabolism, male fertility and brain development. Regulates of energy metabolism by acting as a hormone favoring pancreatic beta-cell proliferation, insulin secretion and sensitivity and energy expenditure. Uncarboxylated osteocalcin hormone also promotes testosterone production in the testes: acts as a ligand for G protein-coupled receptor GPRC6A at the surface of Leydig cells, initiating a signaling response that promotes the expression of enzymes required for testosterone synthesis in a CREB-dependent manner. Also acts as a regulator of brain development: osteocalcin hormone crosses the blood-brain barrier and acts as a ligand for GPR158 on neurons, initiating a signaling response that prevents neuronal apoptosis in the hippocampus, favors the synthesis of all monoamine neurotransmitters and inhibits that of gamma-aminobutyric acid (GABA). Osteocalcin also crosses the placenta during pregnancy and maternal osteocalcin is required for fetal brain development. This Pongo pygmaeus (Bornean orangutan) protein is Osteocalcin.